We begin with the raw amino-acid sequence, 431 residues long: Serine--tRNA ligase (431 aa).

236–238 lines the L-serine pocket; it reads TAE. 267 to 269 lines the ATP pocket; the sequence is RSE. Position 290 (Glu-290) interacts with L-serine. 354–357 serves as a coordination point for ATP; the sequence is EISS. Ser-389 is a binding site for L-serine.

The protein belongs to the class-II aminoacyl-tRNA synthetase family. Type-1 seryl-tRNA synthetase subfamily. In terms of assembly, homodimer. The tRNA molecule binds across the dimer.

It localises to the cytoplasm. It carries out the reaction tRNA(Ser) + L-serine + ATP = L-seryl-tRNA(Ser) + AMP + diphosphate + H(+). It catalyses the reaction tRNA(Sec) + L-serine + ATP = L-seryl-tRNA(Sec) + AMP + diphosphate + H(+). It participates in aminoacyl-tRNA biosynthesis; selenocysteinyl-tRNA(Sec) biosynthesis; L-seryl-tRNA(Sec) from L-serine and tRNA(Sec): step 1/1. Catalyzes the attachment of serine to tRNA(Ser). Is also able to aminoacylate tRNA(Sec) with serine, to form the misacylated tRNA L-seryl-tRNA(Sec), which will be further converted into selenocysteinyl-tRNA(Sec). This chain is Serine--tRNA ligase, found in Herminiimonas arsenicoxydans.